We begin with the raw amino-acid sequence, 75 residues long: Putative DNA-directed RNA polymerase subunit omega (75 aa).

The protein belongs to the RNA polymerase subunit omega family.

It is found in the plastid. The protein localises to the chloroplast. It carries out the reaction RNA(n) + a ribonucleoside 5'-triphosphate = RNA(n+1) + diphosphate. May be involved in RNA polymerase activity. The chain is Putative DNA-directed RNA polymerase subunit omega (rpoZ) from Porphyra purpurea (Red seaweed).